A 210-amino-acid polypeptide reads, in one-letter code: BAG family molecular chaperone regulator 2 (210 aa).

Alanine 2 carries the post-translational modification N-acetylalanine. Serine 20, serine 31, and serine 73 each carry phosphoserine. A coiled-coil region spans residues 20 to 60 (SMADRSSRLLESLDQLELRVEALRDAATAVEQEKEILLEMI). In terms of domain architecture, BAG spans 109–189 (SLKHATRIID…NIDNSDKAIK (81 aa)).

Binds to the ATPase domain of HSP/HSC70 chaperones. May interact with NWD1. Interacts with HSPA1A (via NBD), HSPA1B (via NBD) and HSPA8. May interact with DNJC9; the interaction seems to be histone-dependent.

In terms of biological role, co-chaperone for HSP70 and HSC70 chaperone proteins. Acts as a nucleotide-exchange factor (NEF) promoting the release of ADP from the HSP70 and HSC70 proteins thereby triggering client/substrate protein release. The polypeptide is BAG family molecular chaperone regulator 2 (Bag2) (Mus musculus (Mouse)).